A 216-amino-acid polypeptide reads, in one-letter code: GTP cyclohydrolase 1 2 (216 aa).

The protein belongs to the GTP cyclohydrolase I family. In terms of assembly, homomer.

The enzyme catalyses GTP + H2O = 7,8-dihydroneopterin 3'-triphosphate + formate + H(+). The protein operates within cofactor biosynthesis; 7,8-dihydroneopterin triphosphate biosynthesis; 7,8-dihydroneopterin triphosphate from GTP: step 1/1. This chain is GTP cyclohydrolase 1 2 (folE2), found in Nostoc sp. (strain PCC 7120 / SAG 25.82 / UTEX 2576).